The following is a 496-amino-acid chain: ATP synthase subunit beta 1 (496 aa).

Glycine 167–threonine 174 is a binding site for ATP. The interval arginine 474–alanine 496 is disordered. Over residues alanine 476 to proline 489 the composition is skewed to low complexity.

This sequence belongs to the ATPase alpha/beta chains family. As to quaternary structure, F-type ATPases have 2 components, CF(1) - the catalytic core - and CF(0) - the membrane proton channel. CF(1) has five subunits: alpha(3), beta(3), gamma(1), delta(1), epsilon(1). CF(0) has three main subunits: a(1), b(2) and c(9-12). The alpha and beta chains form an alternating ring which encloses part of the gamma chain. CF(1) is attached to CF(0) by a central stalk formed by the gamma and epsilon chains, while a peripheral stalk is formed by the delta and b chains.

It localises to the cell inner membrane. The catalysed reaction is ATP + H2O + 4 H(+)(in) = ADP + phosphate + 5 H(+)(out). Produces ATP from ADP in the presence of a proton gradient across the membrane. The catalytic sites are hosted primarily by the beta subunits. The sequence is that of ATP synthase subunit beta 1 from Paraburkholderia xenovorans (strain LB400).